Here is a 184-residue protein sequence, read N- to C-terminus: Glucosamine 6-phosphate N-acetyltransferase (184 aa).

The N-acetyltransferase domain occupies leucine 39–lysine 184. Substrate is bound by residues threonine 61, lysine 108–histidine 111, and glutamate 120–valine 122. An acetyl-CoA-binding site is contributed by glycine 130 to lysine 135. Tyrosine 151–lysine 152 is a binding site for substrate. Tyrosine 165 to lysine 167 serves as a coordination point for acetyl-CoA. The substrate site is built by glutamate 175 and arginine 181.

Belongs to the acetyltransferase family. GNA1 subfamily. In terms of assembly, homodimer. In terms of tissue distribution, ubiquitous. Shows a strong differential expression pattern in adult hematopoietic precursor cells.

The protein resides in the golgi apparatus membrane. It localises to the endosome membrane. The enzyme catalyses D-glucosamine 6-phosphate + acetyl-CoA = N-acetyl-D-glucosamine 6-phosphate + CoA + H(+). It participates in nucleotide-sugar biosynthesis; UDP-N-acetyl-alpha-D-glucosamine biosynthesis; N-acetyl-alpha-D-glucosamine 1-phosphate from alpha-D-glucosamine 6-phosphate (route I): step 1/2. The protein is Glucosamine 6-phosphate N-acetyltransferase (Gnpnat1) of Mus musculus (Mouse).